A 141-amino-acid polypeptide reads, in one-letter code: Sec-independent protein translocase protein TatB (141 aa).

The helical transmembrane segment at 1-21 (MFGISFSELLLVGLVALLVLG) threads the bilayer. Residues 74 to 141 (EAQKLLAPLT…SPPSETPRNP (68 aa)) form a disordered region. Residues 89–115 (QETPPPAAESPAPSVPTPPPTSTPAVP) show a composition bias toward pro residues. The segment covering 116–129 (PADAAAPPAVAAST) has biased composition (low complexity). The segment covering 130–141 (PPSPPSETPRNP) has biased composition (pro residues).

Belongs to the TatB family. In terms of assembly, the Tat system comprises two distinct complexes: a TatABC complex, containing multiple copies of TatA, TatB and TatC subunits, and a separate TatA complex, containing only TatA subunits. Substrates initially bind to the TatABC complex, which probably triggers association of the separate TatA complex to form the active translocon.

The protein resides in the cell inner membrane. Part of the twin-arginine translocation (Tat) system that transports large folded proteins containing a characteristic twin-arginine motif in their signal peptide across membranes. Together with TatC, TatB is part of a receptor directly interacting with Tat signal peptides. TatB may form an oligomeric binding site that transiently accommodates folded Tat precursor proteins before their translocation. This chain is Sec-independent protein translocase protein TatB, found in Pseudomonas aeruginosa (strain ATCC 15692 / DSM 22644 / CIP 104116 / JCM 14847 / LMG 12228 / 1C / PRS 101 / PAO1).